The sequence spans 199 residues: MTTLFDILNTLNNNNNNNNYTGCKRQYSINKRVDIIPSMDVTLTNDKLIIETELTGVSKNDIDINIKDSILIIQGEKKKSIIKNQQQQQQQQQLENSNNKENDEPSIEEFEEDVKSKSELNKTTLNTTENKDEDKTTQNINKEFISERSFGNFKRYLNLSEILYQLDLNSIDTQFENGLLTITIKKKFDSSNTIKININ.

Residues 30–199 enclose the sHSP domain; sequence NKRVDIIPSM…SSNTIKININ (170 aa). The segment at 83-105 is disordered; it reads KNQQQQQQQQQLENSNNKENDEP.

It belongs to the small heat shock protein (HSP20) family.

This chain is Small heat shock protein hspG4 (hspG4), found in Dictyostelium discoideum (Social amoeba).